A 1658-amino-acid chain; its full sequence is Cortactin-binding protein 2 (1658 aa).

Disordered stretches follow at residues 1-24 (MATDGASCEPDFSRAPEDAAGATA), 203-235 (KTKTSALEEELSAEKRRSTEMEAQMEKQLSEFD), 348-437 (GAAL…LHPG), 451-475 (GNANDPDQNGNTTQSPPSRDVSPTS), and 495-612 (RFTS…PPKP). The stretch at 119 to 276 (RKMQERMSTQ…EQLKRGNDSK (158 aa)) forms a coiled coil. Over residues 214–235 (SAEKRRSTEMEAQMEKQLSEFD) the composition is skewed to basic and acidic residues. The segment covering 385–394 (GPSAGSASST) has biased composition (low complexity). Positions 399–418 (NSTAPPTVQTPGIAPQSYSQ) are enriched in polar residues. R495 carries the post-translational modification Asymmetric dimethylarginine. Low complexity predominate over residues 509-520 (AAPTGDGGTCPP). Positions 580 to 590 (TMASPPSSLPQ) are enriched in polar residues. ANK repeat units follow at residues 706–736 (GRPTLLQQAATQGNVTLLSMLLNEEGLDINY), 740–769 (DGHSALYSAAKNGHTDCVRLLLNAGAQVNA), 773–802 (NGFTPLCAAAAQGHFKCVELLISYDANINH), 806–835 (EGQTPLYLACKNGNKECIQLLLEAGTDRSV), 839–868 (DGWTPVHAAVDTGNVDSLKLLMYHRAPACR), and 909–939 (EGWTAAHIAASKGFKNCLEILCMHGGLEPER). The disordered stretch occupies residues 1448–1478 (ESGAWRKVSTSPRKKSGRFSPPSWNKPGLSE). The residue at position 1521 (S1521) is a Phosphoserine. Disordered regions lie at residues 1538–1595 (RSES…NSQS) and 1611–1642 (PRSKVTQCSQNTKRSSSSSNTRQIEINNNTKE). A compositionally biased stretch (basic and acidic residues) spans 1539-1558 (SESDISKIADSRDDLRRFDG). Composition is skewed to polar residues over residues 1559 to 1569 (SRNNPAFSTVN) and 1581 to 1595 (PLSSHETTECSNSQS). Positions 1619–1633 (SQNTKRSSSSSNTRQ) are enriched in low complexity.

As to quaternary structure, interacts with CTTN/cortactin SH3 domain. Interacts with STRN, STRN4/zinedin and MOB4/phocein; this interactions mediate the association with the STRIPAK core complex and may regulate dendritic spine distribution of the STRIPAK complex in hippocampal neurons. Activation of glutamate receptors weakens the interaction with STRN and STRN4.

It localises to the cytoplasm. Its subcellular location is the cell cortex. The protein resides in the cell projection. It is found in the dendritic spine. Regulates the dendritic spine distribution of CTTN/cortactin in hippocampal neurons, and thus controls dendritic spinogenesis and dendritic spine maintenance. Associates with the striatin-interacting phosphatase and kinase (STRIPAK) core complex to regulate dendritic spine distribution of the STRIPAK complex in hippocampal neurons. The chain is Cortactin-binding protein 2 (CTTNBP2) from Neofelis nebulosa (Clouded leopard).